A 67-amino-acid chain; its full sequence is COP9 signalosome complex subunit 9 homolog (67 aa).

Residues 1 to 31 form a disordered region; it reads MKPSLAADEMFSEGPGYMEMDESGGATGMMM.

It belongs to the CSN9 family. In terms of assembly, probable component of the COP9 signalosome (CSN) complex.

Its function is as follows. Component of the COP9 signalosome complex (CSN), a complex involved in various cellular and developmental processes. The CSN complex is an essential regulator of the ubiquitin (Ubl) conjugation pathway by mediating the deneddylation of the cullin subunits of SCF-type E3 ligase complexes, leading to decrease the Ubl ligase activity. This Drosophila melanogaster (Fruit fly) protein is COP9 signalosome complex subunit 9 homolog.